Reading from the N-terminus, the 437-residue chain is Bifunctional protein GlmU (437 aa).

Positions 1 to 223 (MHNTAVILAA…WDECRGVNSR (223 aa)) are pyrophosphorylase. Residues 8–11 (LAAG), lysine 22, glutamine 70, 75–76 (GT), 96–98 (YGD), glycine 135, glutamate 149, asparagine 164, and asparagine 221 contribute to the UDP-N-acetyl-alpha-D-glucosamine site. Aspartate 98 provides a ligand contact to Mg(2+). Asparagine 221 serves as a coordination point for Mg(2+). The tract at residues 224–244 (AELAAAEAAMQSRLRAAALAA) is linker. Positions 245–437 (GVTMTAPETV…AELRMTKGKR (193 aa)) are N-acetyltransferase. Positions 310 and 328 each coordinate UDP-N-acetyl-alpha-D-glucosamine. Residue histidine 340 is the Proton acceptor of the active site. UDP-N-acetyl-alpha-D-glucosamine is bound by residues tyrosine 343 and asparagine 354. Residues alanine 357, 363-364 (NY), serine 382, alanine 400, and arginine 417 each bind acetyl-CoA.

The protein in the N-terminal section; belongs to the N-acetylglucosamine-1-phosphate uridyltransferase family. In the C-terminal section; belongs to the transferase hexapeptide repeat family. In terms of assembly, homotrimer. The cofactor is Mg(2+).

It is found in the cytoplasm. It carries out the reaction alpha-D-glucosamine 1-phosphate + acetyl-CoA = N-acetyl-alpha-D-glucosamine 1-phosphate + CoA + H(+). It catalyses the reaction N-acetyl-alpha-D-glucosamine 1-phosphate + UTP + H(+) = UDP-N-acetyl-alpha-D-glucosamine + diphosphate. It functions in the pathway nucleotide-sugar biosynthesis; UDP-N-acetyl-alpha-D-glucosamine biosynthesis; N-acetyl-alpha-D-glucosamine 1-phosphate from alpha-D-glucosamine 6-phosphate (route II): step 2/2. The protein operates within nucleotide-sugar biosynthesis; UDP-N-acetyl-alpha-D-glucosamine biosynthesis; UDP-N-acetyl-alpha-D-glucosamine from N-acetyl-alpha-D-glucosamine 1-phosphate: step 1/1. It participates in bacterial outer membrane biogenesis; LPS lipid A biosynthesis. In terms of biological role, catalyzes the last two sequential reactions in the de novo biosynthetic pathway for UDP-N-acetylglucosamine (UDP-GlcNAc). The C-terminal domain catalyzes the transfer of acetyl group from acetyl coenzyme A to glucosamine-1-phosphate (GlcN-1-P) to produce N-acetylglucosamine-1-phosphate (GlcNAc-1-P), which is converted into UDP-GlcNAc by the transfer of uridine 5-monophosphate (from uridine 5-triphosphate), a reaction catalyzed by the N-terminal domain. The chain is Bifunctional protein GlmU from Acidiphilium cryptum (strain JF-5).